Consider the following 4540-residue polypeptide: Dynein heavy chain, cytoplasmic (4540 aa).

A stem region spans residues 1–1796 (MEESETQLNV…LIQMGNAQFH (1796 aa)). Coiled-coil stretches lie at residues 440–482 (EHIK…NVQQ), 698–722 (RVNY…KTKV), 794–827 (VKKF…AMKT), 975–995 (QQLI…MEQY), 1169–1251 (RSKK…LKMD), and 1295–1311 (QNKK…KQLN). AAA stretches follow at residues 1797 to 2018 (YGFE…VLNS), 2091 to 2348 (KELA…FTRI), 2457 to 2705 (EIDP…WKYA), and 2796 to 3056 (QFNE…AKRF). ATP contacts are provided by residues 1835–1842 (GPAGTGKT), 2129–2136 (GPCGCGKS), 2496–2503 (GPPGSGKT), and 2834–2841 (GSSGVGKT). 4 coiled-coil regions span residues 3076–3182 (NEKK…NAKQ), 3289–3367 (QLKY…RSQA), 3653–3688 (EDEK…VMNT), and 3820–3851 (QQLK…RWLN). Residues 3076-3367 (NEKKSQLEDQ…VQEKVTRSQA (292 aa)) are stalk. The disordered stretch occupies residues 3140-3159 (KKKEDSTRLSSDAEKKAKEM). Residues 3444–3673 (LSRPSDRLNW…LKKEAAVIVQ (230 aa)) form an AAA 5 region. The interval 3908-4123 (ARKLINQILG…QRCSLDLIDE (216 aa)) is AAA 6. 2 coiled-coil regions span residues 4238–4259 (QKLI…TQIE) and 4313–4342 (RFLD…LAQG).

This sequence belongs to the dynein heavy chain family. Consists of at least two heavy chains and a number of intermediate and light chains.

It localises to the cytoplasm. Its subcellular location is the cytoskeleton. Functionally, cytoplasmic dynein acts as a motor for the intracellular retrograde motility of vesicles and organelles along microtubules. Dynein has ATPase activity; the force-producing power stroke is thought to occur on release of ADP. The chain is Dynein heavy chain, cytoplasmic (DHC-8) from Paramecium tetraurelia.